Reading from the N-terminus, the 559-residue chain is DnaJ homolog subfamily C member 11 (559 aa).

N-acetylalanine is present on Ala2. The 69-residue stretch at 14 to 82 (DYYSLLNVRR…QTRAIYDIYG (69 aa)) folds into the J domain. Ser204 is subject to Phosphoserine. Residues 418 to 457 (KELEKQRESTATDILQKKQEAEAAVRLMQESVRRIIEAEE) are a coiled coil.

This sequence belongs to the DNAJC11 family. Associates with the mitochondrial contact site and cristae organizing system (MICOS) complex, composed of at least MICOS10/MIC10, CHCHD3/MIC19, CHCHD6/MIC25, APOOL/MIC27, IMMT/MIC60, APOO/MIC23/MIC26 and QIL1/MIC13. This complex was also known under the names MINOS or MitOS complex. The MICOS complex associates with mitochondrial outer membrane proteins SAMM50, MTX1 and MTX2 (together described as components of the mitochondrial outer membrane sorting assembly machinery (SAM) complex) and DNAJC11, mitochondrial inner membrane protein TMEM11 and with HSPA9. The MICOS and SAM complexes together with DNAJC11 are part of a large protein complex spanning both membranes termed the mitochondrial intermembrane space bridging (MIB) complex.

The protein resides in the mitochondrion. It is found in the mitochondrion outer membrane. Functionally, required for mitochondrial inner membrane organization. Seems to function through its association with the MICOS complex and the mitochondrial outer membrane sorting assembly machinery (SAM) complex. The sequence is that of DnaJ homolog subfamily C member 11 (DNAJC11) from Bos taurus (Bovine).